The primary structure comprises 97 residues: Large ribosomal subunit protein eL21 (97 aa).

The span at 1–12 (MPSSNGPRQATR) shows a compositional bias: polar residues. The tract at residues 1–35 (MPSSNGPRQATRNKLKNDARERGTSPPQRSIEEYD) is disordered.

This sequence belongs to the eukaryotic ribosomal protein eL21 family.

In Natronomonas pharaonis (strain ATCC 35678 / DSM 2160 / CIP 103997 / JCM 8858 / NBRC 14720 / NCIMB 2260 / Gabara) (Halobacterium pharaonis), this protein is Large ribosomal subunit protein eL21.